Reading from the N-terminus, the 562-residue chain is Arginine--tRNA ligase 2 (562 aa).

Residues 122-132 carry the 'HIGH' region motif; the sequence is PNIAKPFSMGH.

The protein belongs to the class-I aminoacyl-tRNA synthetase family. As to quaternary structure, monomer.

Its subcellular location is the cytoplasm. The enzyme catalyses tRNA(Arg) + L-arginine + ATP = L-arginyl-tRNA(Arg) + AMP + diphosphate. The chain is Arginine--tRNA ligase 2 (argS2) from Bacillus anthracis.